The chain runs to 817 residues: Neurabin-2 (817 aa).

Disordered regions lie at residues M1–S52 and M64–K163. 2 actin-binding regions span residues M1 to S154 and E164 to V282. S15 bears the Phosphoserine; by MAPK1 mark. The residue at position 17 (S17) is a Phosphoserine; by CDK5. S94 carries the phosphoserine; by PKA modification. A phosphoserine mark is found at S100 and S116. The interaction with D(2) dopamine receptor stretch occupies residues S100–A371. Over residues S131 to P141 the composition is skewed to pro residues. Residues R169–P255 form an interaction with ADRA2A, ADRA2B and ADRA2C region. Phosphoserine is present on S192. T193 is modified (phosphothreonine). S205 carries the phosphoserine; by MAPK1 modification. T207 bears the Phosphothreonine mark. The tract at residues E216–F451 is disordered. Residues K290–E301 show a composition bias toward basic and acidic residues. Low complexity-rich tracts occupy residues S332 to A341 and S399 to A409. The segment covering L410–Y425 has biased composition (acidic residues). The segment at D417–L494 is interaction with protein phosphatase 1. Residue S438 is modified to Phosphoserine. The short motif at R447 to F451 is the PP1-binding motif element. The tract at residues S480–G525 is interaction with RGS2. One can recognise a PDZ domain in the interval P496–R584. A coiled-coil region spans residues I595–Y616. The interval I595–S816 is interaction with TGN38. S658 is modified (phosphoserine). Residues E665–S816 adopt a coiled-coil conformation.

As to quaternary structure, possibly exists as a homodimer, homotrimer or a homotetramer. Interacts with F-actin, PPP1CA, neurabin-1, TGN38 and D(2) dopamine receptor. Interacts with RGS1, RGS2, RGS4, RGS19 and ADRA1B, ADRA2A, ADRA2B, ADRA2C, CDKN2A, PPP1R2, RASGFR1 and TIAM1. Interacts (via C-terminus) with SPATA13 (via C-terminal tail). Interacts with DCLK2. Interacts with ADRA2B. In terms of processing, stimulation of D1 (but not D2) dopamine receptors induces Ser-94 phosphorylation. Dephosphorylation of Ser-94 is mediated mainly by PP1 and to a lesser extent by PP2A. Phosphorylation of spinophilin disrupts its association with F-actin, but does not affect its binding to PP1.

The protein resides in the cytoplasm. It localises to the cytoskeleton. It is found in the nucleus. Its subcellular location is the postsynaptic density. The protein localises to the cell junction. The protein resides in the adherens junction. It localises to the cell projection. It is found in the dendritic spine. Its subcellular location is the cell membrane. The protein localises to the lamellipodium. The protein resides in the filopodium. It localises to the ruffle membrane. In terms of biological role, seems to act as a scaffold protein in multiple signaling pathways. Modulates excitatory synaptic transmission and dendritic spine morphology. Binds to actin filaments (F-actin) and shows cross-linking activity. Binds along the sides of the F-actin. May play an important role in linking the actin cytoskeleton to the plasma membrane at the synaptic junction. Believed to target protein phosphatase 1/PP1 to dendritic spines, which are rich in F-actin, and regulates its specificity toward ion channels and other substrates, such as AMPA-type and NMDA-type glutamate receptors. Plays a role in regulation of G-protein coupled receptor signaling, including dopamine D2 receptors and alpha-adrenergic receptors. May establish a signaling complex for dopaminergic neurotransmission through D2 receptors by linking receptors downstream signaling molecules and the actin cytoskeleton. Binds to ADRA1B and RGS2 and mediates regulation of ADRA1B signaling. May confer to Rac signaling specificity by binding to both, RacGEFs and Rac effector proteins. Probably regulates p70 S6 kinase activity by forming a complex with TIAM1. Required for hepatocyte growth factor (HGF)-induced cell migration. In Mus musculus (Mouse), this protein is Neurabin-2 (Ppp1r9b).